The primary structure comprises 492 residues: Catalase-2 (492 aa).

Residues His-65 and Asn-138 contribute to the active site. Tyr-348 provides a ligand contact to heme.

Belongs to the catalase family. Homotetramer and heterotetramer. At least six or seven isozymes are produced from a mixture of 3 gene products. Interacts with NCA1. Interacts with LSD1. Heme is required as a cofactor.

The protein localises to the cytoplasm. It is found in the cytosol. It localises to the peroxisome matrix. It catalyses the reaction 2 H2O2 = O2 + 2 H2O. Functionally, catalyzes the degradation of hydrogen peroxide (H(2)O(2)) generated by peroxisomal oxidases to water and oxygen, thereby protecting cells from the toxic effects of hydrogen peroxide. This chain is Catalase-2 (CAT2), found in Arabidopsis thaliana (Mouse-ear cress).